A 233-amino-acid chain; its full sequence is MSKLSKDYVSDSDSDDEVISNEFSIPDGFKKCKHLKNFPLNGDNKKKAKQQQVWLIKFPSNVDISKLKSLPVDFESSTTMTIDKHDYKIMDDTDIESSLTQDNLSNMTLLVPSESKESLKIASTAKDNAPLQFDKVFSVSETAKIPAIDYSKVRVPRKDVPKVEGLKLEHFATGYDAEDFHVAEEVKENKKEPKKRSHHDDEEESSEKKKKKKEKREKREKKDKKDKKKKHRD.

4 positions are modified to phosphoserine: S10, S12, S14, and S60. The span at 179-191 (DFHVAEEVKENKK) shows a compositional bias: basic and acidic residues. Residues 179 to 233 (DFHVAEEVKENKKEPKKRSHHDDEEESSEKKKKKKEKREKREKKDKKDKKKKHRD) form a disordered region. Over residues 208 to 233 (KKKKKKEKREKREKKDKKDKKKKHRD) the composition is skewed to basic residues.

Belongs to the eukaryotic RPA34 RNA polymerase subunit family. Component of the RNA polymerase I (Pol I) complex consisting of 14 subunits: RPA135, RPA190, RPC40, RPA14, RPB5, RPO26, RPA43, RPB8, RPA12, RPB10, RPC19, RPC10, RPA49 and RPA34. The complex is composed of a horseshoe-shaped core containing ten subunits (RPA135, RPA190, RPB5, RPO26, RPB8, RPB10, RPC10, RPA12, RPC19 and RPC40) where RPA135 and RPA190 form the DNA-binding cleft. Outside of the core, RPA14 and RPA43 form the stalk that mediates interactions with transcription initiation factors and newly synthesized RNA. Forms a TFIIF-like heterodimer with RPA49; the heterodimer formed by RPA34 and RPA49 can be dissociated from the Pol I core giving rise to a 12 subunit form A* of Pol I (formerly called pol A) that shows impaired transcript elongation activity and increased sensitivity to alpha-amanitin. The heterodimer formed by RPA34 and RPA49 stabilizes subunit RPA12 and stimulates RPA12-dependent RNA cleavage.

Its subcellular location is the nucleus. It is found in the nucleolus. DNA-dependent RNA polymerases catalyze the transcription of DNA into RNA using the four ribonucleoside triphosphates as substrates. Component of RNA polymerase I (Pol I) which synthesizes ribosomal RNA precursors. Besides, RNA polymerase I has intrinsic RNA cleavage activity. The heterodimer formed by RPA34 and RPA49 stimulates transcript elongation by Pol I. In Saccharomyces cerevisiae (strain ATCC 204508 / S288c) (Baker's yeast), this protein is DNA-directed RNA polymerase I subunit RPA34 (RPA34).